A 418-amino-acid chain; its full sequence is 3-isopropylmalate dehydratase large subunit 1 (418 aa).

Residues Cys-298, Cys-358, and Cys-361 each contribute to the [4Fe-4S] cluster site.

It belongs to the aconitase/IPM isomerase family. LeuC type 2 subfamily. In terms of assembly, heterodimer of LeuC and LeuD. The cofactor is [4Fe-4S] cluster.

The enzyme catalyses (2R,3S)-3-isopropylmalate = (2S)-2-isopropylmalate. It participates in amino-acid biosynthesis; L-leucine biosynthesis; L-leucine from 3-methyl-2-oxobutanoate: step 2/4. Catalyzes the isomerization between 2-isopropylmalate and 3-isopropylmalate, via the formation of 2-isopropylmaleate. The sequence is that of 3-isopropylmalate dehydratase large subunit 1 from Archaeoglobus fulgidus (strain ATCC 49558 / DSM 4304 / JCM 9628 / NBRC 100126 / VC-16).